A 332-amino-acid chain; its full sequence is RNA polymerase principal sigma factor HrdD (332 aa).

The disordered stretch occupies residues 1-21 (MATRAVARRQPAASGETGAAG). The short motif at 124 to 137 (DLIQEGNAGLVRAV) is the Polymerase core binding element. The segment at residues 294–313 (LTEVGKQHGLTRERIRQIEK) is a DNA-binding region (H-T-H motif).

Belongs to the sigma-70 factor family.

Functionally, sigma factors are initiation factors that promote the attachment of RNA polymerase to specific initiation sites and are then released. This Streptomyces griseus protein is RNA polymerase principal sigma factor HrdD (hrdD).